Consider the following 3674-residue polypeptide: Dystrophin (3674 aa).

The segment at 1–236 (MSEVSSDERE…YVTSLFQVLP (236 aa)) is actin-binding. Calponin-homology (CH) domains lie at 11–115 (DVQK…LHWQ) and 130–236 (TNSE…QVLP). The tract at residues 59-68 (PKEKGSTRVH) is ANK2- and ANK-3 binding. Residues 306–318 (SDPTRSPFPSQRL) show a composition bias toward polar residues. The segment at 306 to 325 (SDPTRSPFPSQRLESPEDKS) is disordered. Spectrin repeat units follow at residues 335 to 443 (VNLD…NLHK), 444 to 552 (VLMD…LLQD), 555 to 663 (LKWQ…QISQ), 715 to 824 (EIRK…WLEY), 826 to 930 (NRII…ELQI), 939 to 1041 (RYQE…KLEE), 1044 to 1150 (AKLR…ALKG), 1153 to 1259 (DKTI…TLEE), 1262 to 1363 (ACWH…LLEQ), 1364 to 1459 (SIQS…LFQK), 1464 to 1564 (EQRL…QLEK), 1567 to 1672 (KLSR…LLLE), 1675 to 1774 (KHME…KASI), 1775 to 1870 (PLKE…KALE), 1873 to 1975 (HQWY…TVHE), 1988 to 2097 (EISY…KFDR), 2100 to 2204 (EKWR…RLEE), 2207 to 2314 (NILS…EIEA), 2315 to 2412 (HIKD…LRAK), 2464 to 2566 (FNRA…QLNE), 2569 to 2675 (KDST…VLEE), 2678 to 2791 (RLLQ…HLEA), 2797 to 2919 (KRLH…RKID), and 2924 to 3029 (RLQE…QLHE). The interval 1411–1909 (SDLTSHEISL…PEPQDEKKIK (499 aa)) is interaction with SYNM. Positions 3044–3077 (TSVQGPWERAISPNKVPYYINHETQTTCWDHPKM) constitute a WW domain. The interval 3047-3397 (QGPWERAISP…TVLEGDNMET (351 aa)) is interaction with SYNM. The ZZ-type; degenerate zinc finger occupies 3297-3353 (KHQAKCNICKECPIIGFRYRSLKHFNYDICQSCFFSGRVAKGHKMHYPMVEYCTPTT). Zn(2+)-binding residues include cysteine 3302, cysteine 3305, cysteine 3326, and cysteine 3329. A binds to SNTB1 region spans residues 3455 to 3507 (DDEHLLIQHYCQSLNQDSPLSQPRSPAQILISLESEERGELERILADLEEENR). Phosphoserine occurs at positions 3472, 3479, and 3489. Disordered stretches follow at residues 3517-3543 (KQQH…QSPR) and 3590-3674 (QAEA…EDTM). Polar residues-rich tracts occupy residues 3596 to 3615 (NGTT…SSQP) and 3651 to 3662 (QLNNSFPSSRGR). 6 positions are modified to phosphoserine: serine 3601, serine 3602, serine 3606, serine 3612, serine 3613, and serine 3655.

In terms of assembly, interacts with SYNM. Interacts with the syntrophins SNTG1 and SNTG2. Interacts with KRT19. Component of the dystrophin-associated glycoprotein complex which is composed of three subcomplexes: a cytoplasmic complex comprised of DMD (or UTRN), DTNA and a number of syntrophins, such as SNTB1, SNTB2, SNTG1 and SNTG2, the transmembrane dystroglycan complex, and the sarcoglycan-sarcospan complex. Interacts with DAG1 (betaDAG1) with DMD; the interaction is inhibited by phosphorylation on the PPXY motif of DAG1. Interacts with SYNM; SNTA1 and SNTB1. Interacts with CMYA5. Directly interacts with ANK2 and ANK3; these interactions do not interfere with betaDAG1-binding and are necessary for proper localization in muscle cells. Identified in a dystroglycan complex that contains at least PRX, DRP2, UTRN, DMD and DAG1. Interacts with DTNB. Interacts with PGM5; the interaction is direct. Interacts with NOS1; localizes NOS1 to sarcolemma in muscle cells. As to expression, in the retina, expressed in the outer plexiform layer (OPL) and around the blood vessels. Also observed at the vitreal border of the retina corresponding to the inner limiting membrane (ILM). Presynaptically localized in cone pedicles and postsynaptically in bipolar cells (at protein level).

Its subcellular location is the cell membrane. It localises to the sarcolemma. The protein resides in the cytoplasm. It is found in the cytoskeleton. The protein localises to the postsynaptic cell membrane. Functionally, anchors the extracellular matrix to the cytoskeleton via F-actin. Ligand for dystroglycan. Component of the dystrophin-associated glycoprotein complex which accumulates at the neuromuscular junction (NMJ) and at a variety of synapses in the peripheral and central nervous systems and has a structural function in stabilizing the sarcolemma. Also implicated in signaling events and synaptic transmission. The protein is Dystrophin of Sus scrofa (Pig).